We begin with the raw amino-acid sequence, 74 residues long: Mitochondrial import receptor subunit TOM6 homolog (74 aa).

Polar residues predominate over residues 1 to 16 (MASSTVPVSAAGSANE). The tract at residues 1–22 (MASSTVPVSAAGSANETPEIPD) is disordered. Ala-2 bears the N-acetylalanine mark.

This sequence belongs to the Tom6 family. Forms part of the preprotein translocase complex of the outer mitochondrial membrane (TOM complex) which consists of at least 7 different proteins (TOMM5, TOMM6, TOMM7, TOMM20, TOMM22, TOMM40 and TOMM70).

The protein resides in the mitochondrion outer membrane. This chain is Mitochondrial import receptor subunit TOM6 homolog (TOMM6), found in Homo sapiens (Human).